The sequence spans 93 residues: Acylphosphatase (93 aa).

An Acylphosphatase-like domain is found at 5–93; that stretch reads AKQIVVRGRV…PNFRGFQVTG (89 aa). Active-site residues include Arg-20 and Asn-38.

This sequence belongs to the acylphosphatase family.

It catalyses the reaction an acyl phosphate + H2O = a carboxylate + phosphate + H(+). The polypeptide is Acylphosphatase (acyP) (Lacticaseibacillus paracasei (strain ATCC 334 / BCRC 17002 / CCUG 31169 / CIP 107868 / KCTC 3260 / NRRL B-441) (Lactobacillus paracasei)).